A 199-amino-acid polypeptide reads, in one-letter code: Acireductone dioxygenase 3 (199 aa).

Residues His-99, His-101, Glu-105, and His-144 each contribute to the Fe(2+) site. His-99, His-101, Glu-105, and His-144 together coordinate Ni(2+).

The protein belongs to the acireductone dioxygenase (ARD) family. Requires Fe(2+) as cofactor. The cofactor is Ni(2+).

Its subcellular location is the cytoplasm. The protein localises to the nucleus. The catalysed reaction is 1,2-dihydroxy-5-(methylsulfanyl)pent-1-en-3-one + O2 = 4-methylsulfanyl-2-oxobutanoate + formate + 2 H(+). It catalyses the reaction 1,2-dihydroxy-5-(methylsulfanyl)pent-1-en-3-one + O2 = 3-(methylsulfanyl)propanoate + CO + formate + 2 H(+). The protein operates within amino-acid biosynthesis; L-methionine biosynthesis via salvage pathway; L-methionine from S-methyl-5-thio-alpha-D-ribose 1-phosphate: step 5/6. Catalyzes 2 different reactions between oxygen and the acireductone 1,2-dihydroxy-3-keto-5-methylthiopentene (DHK-MTPene) depending upon the metal bound in the active site. Fe-containing acireductone dioxygenase (Fe-ARD) produces formate and 2-keto-4-methylthiobutyrate (KMTB), the alpha-ketoacid precursor of methionine in the methionine recycle pathway. Ni-containing acireductone dioxygenase (Ni-ARD) produces methylthiopropionate, carbon monoxide and formate, and does not lie on the methionine recycle pathway. The chain is Acireductone dioxygenase 3 (ARD3) from Arabidopsis thaliana (Mouse-ear cress).